The chain runs to 409 residues: Imidazolonepropionase (409 aa).

The Fe(3+) site is built by histidine 70 and histidine 72. 2 residues coordinate Zn(2+): histidine 70 and histidine 72. 4-imidazolone-5-propanoate-binding residues include arginine 79, tyrosine 137, and histidine 164. Tyrosine 137 is an N-formimidoyl-L-glutamate binding site. Histidine 225 contributes to the Fe(3+) binding site. Histidine 225 contributes to the Zn(2+) binding site. Position 228 (glutamine 228) interacts with 4-imidazolone-5-propanoate. Asparagine 314 and glycine 316 together coordinate N-formimidoyl-L-glutamate. Residue threonine 317 coordinates 4-imidazolone-5-propanoate.

It belongs to the metallo-dependent hydrolases superfamily. HutI family. The cofactor is Zn(2+). It depends on Fe(3+) as a cofactor.

The protein resides in the cytoplasm. It carries out the reaction 4-imidazolone-5-propanoate + H2O = N-formimidoyl-L-glutamate. It functions in the pathway amino-acid degradation; L-histidine degradation into L-glutamate; N-formimidoyl-L-glutamate from L-histidine: step 3/3. Functionally, catalyzes the hydrolytic cleavage of the carbon-nitrogen bond in imidazolone-5-propanoate to yield N-formimidoyl-L-glutamate. It is the third step in the universal histidine degradation pathway. This is Imidazolonepropionase from Paenarthrobacter aurescens (strain TC1).